We begin with the raw amino-acid sequence, 633 residues long: Threonine--tRNA ligase (633 aa).

The 61-residue stretch at 1–61 (MINVYFSDNS…TEDCKFEVIT (61 aa)) folds into the TGS domain. The segment at 242 to 533 (DHRKIGKELE…LIEHHSGKLP (292 aa)) is catalytic. Positions 333, 384, and 510 each coordinate Zn(2+).

The protein belongs to the class-II aminoacyl-tRNA synthetase family. As to quaternary structure, homodimer. It depends on Zn(2+) as a cofactor.

The protein resides in the cytoplasm. It catalyses the reaction tRNA(Thr) + L-threonine + ATP = L-threonyl-tRNA(Thr) + AMP + diphosphate + H(+). Its function is as follows. Catalyzes the attachment of threonine to tRNA(Thr) in a two-step reaction: L-threonine is first activated by ATP to form Thr-AMP and then transferred to the acceptor end of tRNA(Thr). Also edits incorrectly charged L-seryl-tRNA(Thr). This is Threonine--tRNA ligase from Ehrlichia ruminantium (strain Gardel).